We begin with the raw amino-acid sequence, 186 residues long: Ribosome-recycling factor (186 aa).

It belongs to the RRF family.

Its subcellular location is the cytoplasm. Its function is as follows. Responsible for the release of ribosomes from messenger RNA at the termination of protein biosynthesis. May increase the efficiency of translation by recycling ribosomes from one round of translation to another. This Burkholderia thailandensis (strain ATCC 700388 / DSM 13276 / CCUG 48851 / CIP 106301 / E264) protein is Ribosome-recycling factor.